We begin with the raw amino-acid sequence, 126 residues long: Aspartate 1-decarboxylase (126 aa).

Residue S25 is the Schiff-base intermediate with substrate; via pyruvic acid of the active site. At S25 the chain carries Pyruvic acid (Ser). Position 57 (T57) interacts with substrate. Residue Y58 is the Proton donor of the active site. Position 73–75 (G73–A75) interacts with substrate.

The protein belongs to the PanD family. In terms of assembly, heterooctamer of four alpha and four beta subunits. Pyruvate serves as cofactor. Is synthesized initially as an inactive proenzyme, which is activated by self-cleavage at a specific serine bond to produce a beta-subunit with a hydroxyl group at its C-terminus and an alpha-subunit with a pyruvoyl group at its N-terminus.

The protein resides in the cytoplasm. The catalysed reaction is L-aspartate + H(+) = beta-alanine + CO2. It functions in the pathway cofactor biosynthesis; (R)-pantothenate biosynthesis; beta-alanine from L-aspartate: step 1/1. Functionally, catalyzes the pyruvoyl-dependent decarboxylation of aspartate to produce beta-alanine. In Psychrobacter sp. (strain PRwf-1), this protein is Aspartate 1-decarboxylase.